The primary structure comprises 171 residues: Adenine phosphoribosyltransferase (171 aa).

The protein belongs to the purine/pyrimidine phosphoribosyltransferase family. Homodimer.

The protein localises to the cytoplasm. It carries out the reaction AMP + diphosphate = 5-phospho-alpha-D-ribose 1-diphosphate + adenine. It participates in purine metabolism; AMP biosynthesis via salvage pathway; AMP from adenine: step 1/1. In terms of biological role, catalyzes a salvage reaction resulting in the formation of AMP, that is energically less costly than de novo synthesis. This is Adenine phosphoribosyltransferase from Synechococcus sp. (strain ATCC 27144 / PCC 6301 / SAUG 1402/1) (Anacystis nidulans).